We begin with the raw amino-acid sequence, 92 residues long: Small ribosomal subunit protein uS19c (92 aa).

The protein belongs to the universal ribosomal protein uS19 family.

The protein resides in the plastid. The protein localises to the chloroplast. Protein S19 forms a complex with S13 that binds strongly to the 16S ribosomal RNA. This Liriodendron tulipifera (Tuliptree) protein is Small ribosomal subunit protein uS19c.